The sequence spans 280 residues: 3-phenylpropionate-dihydrodiol/cinnamic acid-dihydrodiol dehydrogenase (280 aa).

A substrate-binding site is contributed by Ser143. The active-site Proton acceptor is Tyr156.

Belongs to the short-chain dehydrogenases/reductases (SDR) family.

The enzyme catalyses 3-(cis-5,6-dihydroxycyclohexa-1,3-dien-1-yl)propanoate + NAD(+) = 3-(2,3-dihydroxyphenyl)propanoate + NADH + H(+). The catalysed reaction is (2E)-3-(cis-5,6-dihydroxycyclohexa-1,3-dien-1-yl)prop-2-enoate + NAD(+) = (2E)-3-(2,3-dihydroxyphenyl)prop-2-enoate + NADH + H(+). The protein operates within aromatic compound metabolism; 3-phenylpropanoate degradation. Converts 3-phenylpropionate-dihydrodiol (PP-dihydrodiol) and cinnamic acid-dihydrodiol (CI-dihydrodiol) into 3-(2,3-dihydroxylphenyl)propanoic acid (DHPP) and 2,3-dihydroxicinnamic acid (DHCI), respectively. The sequence is that of 3-phenylpropionate-dihydrodiol/cinnamic acid-dihydrodiol dehydrogenase from Photorhabdus laumondii subsp. laumondii (strain DSM 15139 / CIP 105565 / TT01) (Photorhabdus luminescens subsp. laumondii).